We begin with the raw amino-acid sequence, 532 residues long: uncharacterized protein (532 aa).

13 helical membrane passes run 13 to 33, 53 to 73, 80 to 100, 111 to 131, 142 to 162, 169 to 189, 203 to 223, 231 to 251, 273 to 293, 306 to 326, 334 to 354, 361 to 381, and 483 to 503; these read MSLLIVLMAGLFLAILNQTLL, WLTTGYMLVNGVLIPLSAFLI, SLFLVAMFCFTLGTLVCGIAP, IQAVGGGILQPLVMTTILLIF, IFGLAMMFAPAVGPTLSGWII, IMFYGLVPIGAIVIIVAFFIF, LGAILSIVGFASLLYGVSEAG, IVLSTVIIGAIAIVAFVVQQL, VINIIITVALYTGMFLLPIYL, LLLLPGAIVMLIMSPISGILF, LAIIGLLVTVVTTYQYTQLTI, IMLIYSIRAFGMSLLMMPVMT, and INDAFMWATLFCVAGLILSIF.

It belongs to the major facilitator superfamily. EmrB family.

Its subcellular location is the cell membrane. This is an uncharacterized protein from Bacillus subtilis (strain 168).